A 207-amino-acid polypeptide reads, in one-letter code: Holliday junction branch migration complex subunit RuvA (207 aa).

The tract at residues 1–63 (MIDSLHGEVL…DDGIDLYAFE (63 aa)) is domain I. The interval 64-142 (SDEARQMFAM…VFDSGDSASE (79 aa)) is domain II. The flexible linker stretch occupies residues 143-154 (PQSGVGGNSEAE). Positions 155–207 (VDSGVVGTVTQALVELGFPEKQAEKTATSAAAEGGSVSEILKRALRSMSSERN) are domain III.

The protein belongs to the RuvA family. As to quaternary structure, homotetramer. Forms an RuvA(8)-RuvB(12)-Holliday junction (HJ) complex. HJ DNA is sandwiched between 2 RuvA tetramers; dsDNA enters through RuvA and exits via RuvB. An RuvB hexamer assembles on each DNA strand where it exits the tetramer. Each RuvB hexamer is contacted by two RuvA subunits (via domain III) on 2 adjacent RuvB subunits; this complex drives branch migration. In the full resolvosome a probable DNA-RuvA(4)-RuvB(12)-RuvC(2) complex forms which resolves the HJ.

The protein resides in the cytoplasm. Its function is as follows. The RuvA-RuvB-RuvC complex processes Holliday junction (HJ) DNA during genetic recombination and DNA repair, while the RuvA-RuvB complex plays an important role in the rescue of blocked DNA replication forks via replication fork reversal (RFR). RuvA specifically binds to HJ cruciform DNA, conferring on it an open structure. The RuvB hexamer acts as an ATP-dependent pump, pulling dsDNA into and through the RuvAB complex. HJ branch migration allows RuvC to scan DNA until it finds its consensus sequence, where it cleaves and resolves the cruciform DNA. The chain is Holliday junction branch migration complex subunit RuvA from Corynebacterium kroppenstedtii (strain DSM 44385 / JCM 11950 / CIP 105744 / CCUG 35717).